We begin with the raw amino-acid sequence, 101 residues long: Small ribosomal subunit protein uS14 (101 aa).

Positions 1–24 (MAKVSSIKKNEKRKKLSQSLHNKR) are disordered. Basic residues predominate over residues 10–24 (NEKRKKLSQSLHNKR).

It belongs to the universal ribosomal protein uS14 family. In terms of assembly, part of the 30S ribosomal subunit. Contacts proteins S3 and S10.

Binds 16S rRNA, required for the assembly of 30S particles and may also be responsible for determining the conformation of the 16S rRNA at the A site. The polypeptide is Small ribosomal subunit protein uS14 (Rickettsia bellii (strain OSU 85-389)).